Consider the following 169-residue polypeptide: Probable NADH dehydrogenase [ubiquinone] 1 alpha subcomplex subunit 5, mitochondrial (169 aa).

Residues 1–11 constitute a mitochondrion transit peptide; sequence MFLRAIGRPLL.

The protein belongs to the complex I NDUFA5 subunit family. Complex I is composed of at least 49 different subunits.

Its subcellular location is the mitochondrion inner membrane. Accessory subunit of the mitochondrial membrane respiratory chain NADH dehydrogenase (Complex I), that is believed not to be involved in catalysis. Complex I functions in the transfer of electrons from NADH to the respiratory chain. The immediate electron acceptor for the enzyme is believed to be ubiquinone. The chain is Probable NADH dehydrogenase [ubiquinone] 1 alpha subcomplex subunit 5, mitochondrial from Arabidopsis thaliana (Mouse-ear cress).